An 868-amino-acid polypeptide reads, in one-letter code: Coatomer subunit gamma (868 aa).

Positions 1 to 11 (MWRTKRGRTRR) are enriched in basic residues. A disordered region spans residues 1–22 (MWRTKRGRTRRRDAGGNPWQNL). HEAT repeat units lie at residues 64–101 (REATECFFAMTKLFQSKDVVMRRMVYLGIKELSPIADD), 287–324 (RELSTAVSILQLFCGSSKATLRFAAVRTMNKVAMLHPP), 326–359 (VNVCNLDLEGLIADSNRSVATLAITTLLKTGAES), and 360–396 (SVERLMKQIATFVAEISDEFKLVVVQAIRSLCTKFPR).

The protein belongs to the COPG family. In terms of assembly, oligomeric complex that consists of at least the alpha, beta, beta', gamma, delta, epsilon and zeta subunits.

The protein localises to the cytoplasm. It localises to the golgi apparatus membrane. Its subcellular location is the cytoplasmic vesicle. It is found in the COPI-coated vesicle membrane. The protein resides in the endoplasmic reticulum. The coatomer is a cytosolic protein complex that binds to dilysine motifs and reversibly associates with Golgi non-clathrin-coated vesicles, which further mediate biosynthetic protein transport from the ER, via the Golgi up to the trans Golgi network. Coatomer complex is required for budding from Golgi membranes, and is essential for the retrograde Golgi-to-ER transport of dilysine-tagged proteins. The chain is Coatomer subunit gamma from Anopheles gambiae (African malaria mosquito).